The sequence spans 71 residues: Small ribosomal subunit protein bS21 (71 aa).

Residues 47 to 71 (RENATRAKRHAKRVARENARNTRLY) are disordered. A compositionally biased stretch (basic and acidic residues) spans 60 to 71 (VARENARNTRLY).

It belongs to the bacterial ribosomal protein bS21 family.

The protein is Small ribosomal subunit protein bS21 of Actinobacillus succinogenes (strain ATCC 55618 / DSM 22257 / CCUG 43843 / 130Z).